The sequence spans 369 residues: Anhydro-N-acetylmuramic acid kinase (369 aa).

ATP is bound at residue 12 to 19; that stretch reads GTSLDGVD.

It belongs to the anhydro-N-acetylmuramic acid kinase family.

It catalyses the reaction 1,6-anhydro-N-acetyl-beta-muramate + ATP + H2O = N-acetyl-D-muramate 6-phosphate + ADP + H(+). The protein operates within amino-sugar metabolism; 1,6-anhydro-N-acetylmuramate degradation. It participates in cell wall biogenesis; peptidoglycan recycling. In terms of biological role, catalyzes the specific phosphorylation of 1,6-anhydro-N-acetylmuramic acid (anhMurNAc) with the simultaneous cleavage of the 1,6-anhydro ring, generating MurNAc-6-P. Is required for the utilization of anhMurNAc either imported from the medium or derived from its own cell wall murein, and thus plays a role in cell wall recycling. The polypeptide is Anhydro-N-acetylmuramic acid kinase (Escherichia coli O81 (strain ED1a)).